The primary structure comprises 679 residues: Cysteine-rich receptor-like protein kinase 29 (679 aa).

The signal sequence occupies residues 1–23 (MEHVRVIFFFACFLTLAPFHAFA). The Extracellular portion of the chain corresponds to 24 to 286 (QVDSYEFDPD…RTGKGKGGSK (263 aa)). Gnk2-homologous domains are found at residues 30-134 (FDPD…NRTI) and 140-249 (TNPT…TWRF). 6 N-linked (GlcNAc...) asparagine glycosylation sites follow: N41, N45, N71, N107, N131, and N187. Residues 260–281 (PPAIQPADSPQSAARTERTGKG) form a disordered region. The helical transmembrane segment at 287–307 (VIIAIVIPILLVALLAICLCL) threads the bilayer. The Cytoplasmic portion of the chain corresponds to 308-679 (VLKWRKNKSG…DVTVSEFSPR (372 aa)). In terms of domain architecture, Protein kinase spans 357–637 (FSSENELGRG…SLMLNSYSFT (281 aa)). Residues 363-371 (LGRGGFGSV) and K385 each bind ATP. Y430 bears the Phosphotyrosine mark. The active-site Proton acceptor is D482. S486 is subject to Phosphoserine. The residue at position 524 (T524) is a Phosphothreonine. Residue Y532 is modified to Phosphotyrosine. Residues 659–679 (SSTEGLQMSSNDVTVSEFSPR) form a disordered region.

It belongs to the protein kinase superfamily. Ser/Thr protein kinase family. CRK subfamily.

The protein resides in the membrane. It carries out the reaction L-seryl-[protein] + ATP = O-phospho-L-seryl-[protein] + ADP + H(+). The enzyme catalyses L-threonyl-[protein] + ATP = O-phospho-L-threonyl-[protein] + ADP + H(+). The sequence is that of Cysteine-rich receptor-like protein kinase 29 (CRK29) from Arabidopsis thaliana (Mouse-ear cress).